The chain runs to 221 residues: Ribonuclease S-2 (221 aa).

Residues 1-20 (MIYIFTMVFSLNVLILSSSA) form the signal peptide. Residue Gln-31 coordinates RNA. An intrachain disulfide couples Cys-37 to Cys-44. Residues His-55, 91 to 92 (NV), Phe-101, 104 to 105 (KQ), and 108 to 109 (KH) contribute to the RNA site. The active-site Proton donor is His-55. The cysteines at positions 70 and 112 are disulfide-linked. Residue Asn-91 is glycosylated (N-linked (GlcNAc...) asparagine). Residue Gln-105 is part of the active site. The Proton acceptor role is filled by His-109. Residues Asn-137, Asn-153, and Asn-195 are each glycosylated (N-linked (GlcNAc...) asparagine). Disulfide bonds link Cys-176-Cys-214 and Cys-191-Cys-202.

It belongs to the RNase T2 family. N-linked core structure at Asn-91, Asn-137, and Asn-153 contains xylose and at Asn-195 contains xylose and fucose.

The protein localises to the secreted. It is found in the extracellular space. The enzyme catalyses a ribonucleotidyl-ribonucleotide-RNA + H2O = a 3'-end 3'-phospho-ribonucleotide-RNA + a 5'-end dephospho-ribonucleoside-RNA + H(+). Self-incompatibility (SI) is the inherited ability of a flowering plant to prevent self-fertilization by discriminating between self and non-self pollen during pollination. In many species, self-incompatibility is controlled by the single, multiallelic locus S. The chain is Ribonuclease S-2 from Pyrus pyrifolia (Chinese pear).